The primary structure comprises 903 residues: Protein translocase subunit SecA (903 aa).

ATP-binding positions include glutamine 87, 105–109 (GEGKT), and aspartate 513. Positions 840–853 (MEAQRRAQAEEAAR) are enriched in basic and acidic residues. The disordered stretch occupies residues 840–903 (MEAQRRAQAE…KYKQCHGQIN (64 aa)). Residues cysteine 887, cysteine 889, cysteine 898, and histidine 899 each coordinate Zn(2+).

The protein belongs to the SecA family. As to quaternary structure, monomer and homodimer. Part of the essential Sec protein translocation apparatus which comprises SecA, SecYEG and auxiliary proteins SecDF-YajC and YidC. Requires Zn(2+) as cofactor.

The protein resides in the cell inner membrane. It localises to the cytoplasm. The catalysed reaction is ATP + H2O + cellular proteinSide 1 = ADP + phosphate + cellular proteinSide 2.. Part of the Sec protein translocase complex. Interacts with the SecYEG preprotein conducting channel. Has a central role in coupling the hydrolysis of ATP to the transfer of proteins into and across the cell membrane, serving both as a receptor for the preprotein-SecB complex and as an ATP-driven molecular motor driving the stepwise translocation of polypeptide chains across the membrane. This Vibrio cholerae serotype O1 (strain M66-2) protein is Protein translocase subunit SecA.